Consider the following 207-residue polypeptide: Octanoyltransferase (207 aa).

One can recognise a BPL/LPL catalytic domain in the interval 27–202; it reads GETPDELWIV…HLETRLARPQ (176 aa). Substrate-binding positions include 66-73, 133-135, and 146-148; these read RGGQITYH, SLG, and GLS. Cys164 serves as the catalytic Acyl-thioester intermediate.

This sequence belongs to the LipB family.

The protein resides in the cytoplasm. It carries out the reaction octanoyl-[ACP] + L-lysyl-[protein] = N(6)-octanoyl-L-lysyl-[protein] + holo-[ACP] + H(+). It functions in the pathway protein modification; protein lipoylation via endogenous pathway; protein N(6)-(lipoyl)lysine from octanoyl-[acyl-carrier-protein]: step 1/2. In terms of biological role, catalyzes the transfer of endogenously produced octanoic acid from octanoyl-acyl-carrier-protein onto the lipoyl domains of lipoate-dependent enzymes. Lipoyl-ACP can also act as a substrate although octanoyl-ACP is likely to be the physiological substrate. The sequence is that of Octanoyltransferase from Laribacter hongkongensis (strain HLHK9).